Reading from the N-terminus, the 233-residue chain is Orotidine 5'-phosphate decarboxylase (233 aa).

Substrate is bound by residues aspartate 11, lysine 34, 61–70 (DLKLHDIPNT), threonine 117, arginine 179, glutamine 189, glycine 209, and arginine 210. The active-site Proton donor is lysine 63.

The protein belongs to the OMP decarboxylase family. Type 1 subfamily. As to quaternary structure, homodimer.

The enzyme catalyses orotidine 5'-phosphate + H(+) = UMP + CO2. Its pathway is pyrimidine metabolism; UMP biosynthesis via de novo pathway; UMP from orotate: step 2/2. Catalyzes the decarboxylation of orotidine 5'-monophosphate (OMP) to uridine 5'-monophosphate (UMP). This Streptococcus agalactiae serotype III (strain NEM316) protein is Orotidine 5'-phosphate decarboxylase.